A 179-amino-acid chain; its full sequence is Large ribosomal subunit protein uL22c (179 aa).

This sequence belongs to the universal ribosomal protein uL22 family. Part of the 50S ribosomal subunit.

Its subcellular location is the plastid. The protein localises to the chloroplast. Functionally, this protein binds specifically to 23S rRNA. Its function is as follows. The globular domain of the protein is located near the polypeptide exit tunnel on the outside of the subunit, while an extended beta-hairpin is found that lines the wall of the exit tunnel in the center of the 70S ribosome. The sequence is that of Large ribosomal subunit protein uL22c (rpl22) from Ranunculus macranthus (Large buttercup).